A 535-amino-acid chain; its full sequence is Doublesex- and mab-3-related transcription factor A2 (535 aa).

A DNA-binding region (DM) is located at residues 69–116 (CARCRNHGVVSALKGHKRYCRWKDCLCAKCTLIAERQRVMAAQVALRR). Residues 200-315 (LQAGRPGSPQ…GGPGPRQRTP (116 aa)) form a disordered region. One can recognise a DMA domain in the interval 313–348 (RTPLDILTRVFPGHRRGVLELVLQGCGGDVVQAIEQ).

The protein belongs to the DMRT family.

It is found in the nucleus. Its function is as follows. May be involved in sexual development. The chain is Doublesex- and mab-3-related transcription factor A2 (DMRTA2) from Bos taurus (Bovine).